The chain runs to 358 residues: Protein-arginine kinase (358 aa).

Residues 24-255 form the Phosphagen kinase C-terminal domain; the sequence is IVLSSRIRLA…KQLIRQERVA (232 aa). Residues 27–31, H92, R126, 177–181, and 208–213 contribute to the ATP site; these read SSRIR, RASVM, and RGIYGE. An RDXXRA motif of the pArg binding pocket involved in allosteric regulation motif is present at residues 338-343; that stretch reads RDERRA.

The protein belongs to the ATP:guanido phosphotransferase family.

The catalysed reaction is L-arginyl-[protein] + ATP = N(omega)-phospho-L-arginyl-[protein] + ADP + H(+). Appears to be allosterically activated by the binding of pArg-containing polypeptides to the pArg-binding pocket localized in the C-terminal domain of McsB. Its function is as follows. Catalyzes the specific phosphorylation of arginine residues in a large number of proteins. Is part of the bacterial stress response system. Protein arginine phosphorylation has a physiologically important role and is involved in the regulation of many critical cellular processes, such as protein homeostasis, motility, competence, and stringent and stress responses, by regulating gene expression and protein activity. The sequence is that of Protein-arginine kinase from Shouchella clausii (strain KSM-K16) (Alkalihalobacillus clausii).